The primary structure comprises 63 residues: SPbeta prophage-derived uncharacterized protein YomP (63 aa).

In Bacillus subtilis (strain 168), this protein is SPbeta prophage-derived uncharacterized protein YomP (yomP).